A 252-amino-acid polypeptide reads, in one-letter code: Flap endonuclease Xni (252 aa).

Mg(2+) is bound at residue aspartate 105. Residues 161–251 enclose the 5'-3' exonuclease domain; it reads VESTQFIDYL…NVNLKQFRIE (91 aa). Residues leucine 172, alanine 173, proline 181, valine 183, and isoleucine 186 each contribute to the K(+) site. An interaction with DNA region spans residues 185–190; the sequence is GIGPKS.

The protein belongs to the Xni family. The cofactor is Mg(2+). Requires K(+) as cofactor.

Its function is as follows. Has flap endonuclease activity. During DNA replication, flap endonucleases cleave the 5'-overhanging flap structure that is generated by displacement synthesis when DNA polymerase encounters the 5'-end of a downstream Okazaki fragment. The polypeptide is Flap endonuclease Xni (Shewanella halifaxensis (strain HAW-EB4)).